The chain runs to 182 residues: UPF0301 protein NMC1274 (182 aa).

This sequence belongs to the UPF0301 (AlgH) family.

The sequence is that of UPF0301 protein NMC1274 from Neisseria meningitidis serogroup C / serotype 2a (strain ATCC 700532 / DSM 15464 / FAM18).